The primary structure comprises 663 residues: Transmembrane 9 superfamily member 2 (663 aa).

The first 28 residues, 1-28 (MSARLPVLSPPRWPRLLLLSLLLLGAVP), serve as a signal peptide directing secretion. Residues 29-300 (GPRRSGAFYL…LESMPHTHIQ (272 aa)) are Lumenal-facing. Residues 301–321 (WFSIMNSLVIVLFLSGMVAMI) form a helical membrane-spanning segment. The Cytoplasmic portion of the chain corresponds to 322–374 (MLRTLHKDIARYNQMDSTEDAQEEFGWKLVHGDIFRPPRKGMLLSVFLGSGTQ). Residues 375–395 (ILIMTFVTLFFACLGFLSPAN) form a helical membrane-spanning segment. Residues 396-398 (RGA) are Lumenal-facing. The helical transmembrane segment at 399 to 419 (LMTCAVVLWVLLGTPAGYVAA) threads the bilayer. The Cytoplasmic portion of the chain corresponds to 420 to 437 (RFYKSFGGEKWKTNVLLT). Residues 438–458 (SFLCPGIVFADFFIMNLILWG) form a helical membrane-spanning segment. Over 459–466 (EGSSAAIP) the chain is Lumenal. A helical membrane pass occupies residues 467–487 (FGTLVAILALWFCISVPLTFI). Topologically, residues 488–522 (GAYFGFKKNAIEHPVRTNQIPRQIPEQSFYTKPLP) are cytoplasmic. Residues 523 to 543 (GIIMGGILPFGCIFIQLFFIL) form a helical membrane-spanning segment. Residues 544 to 554 (NSIWSHQMYYM) lie on the Lumenal side of the membrane. The helical transmembrane segment at 555–575 (FGFLFLVFIILVITCSEATIL) threads the bilayer. Residues 576-591 (LCYFHLCAEDYHWQWR) lie on the Cytoplasmic side of the membrane. A helical membrane pass occupies residues 592 to 612 (SFLTSGFTAVYFLIYAVHYFF). The Lumenal segment spans residues 613 to 631 (SKLQITGTASTILYFGYTM). A helical transmembrane segment spans residues 632–652 (IMVLIFFLFTGTIGFFACFWF). Residues 653 to 663 (VTKIYSVVKVD) are Cytoplasmic-facing.

The protein belongs to the nonaspanin (TM9SF) (TC 9.A.2) family. Ubiquitously expressed. Especially abundant in pancreas, highly expressed in kidney, lower levels in heart, brain, skeletal muscle and placenta. Lowest expression in lung and liver.

The protein resides in the endosome membrane. The protein localises to the golgi outpost. It localises to the cytoplasm. Its subcellular location is the cytoskeleton. It is found in the microtubule organizing center. Functionally, in the intracellular compartments, may function as a channel or small molecule transporter. This chain is Transmembrane 9 superfamily member 2 (TM9SF2), found in Homo sapiens (Human).